The chain runs to 280 residues: Pantothenate synthetase (280 aa).

31–38 contributes to the ATP binding site; it reads MGNLHVGH. Catalysis depends on H38, which acts as the Proton donor. (R)-pantoate is bound at residue Q62. Q62 is a binding site for beta-alanine. Position 150 to 153 (150 to 153) interacts with ATP; it reads GKKD. Q156 contacts (R)-pantoate. ATP-binding positions include V179 and 187 to 190; that span reads MSSR.

It belongs to the pantothenate synthetase family. Homodimer.

Its subcellular location is the cytoplasm. It carries out the reaction (R)-pantoate + beta-alanine + ATP = (R)-pantothenate + AMP + diphosphate + H(+). It participates in cofactor biosynthesis; (R)-pantothenate biosynthesis; (R)-pantothenate from (R)-pantoate and beta-alanine: step 1/1. Catalyzes the condensation of pantoate with beta-alanine in an ATP-dependent reaction via a pantoyl-adenylate intermediate. The polypeptide is Pantothenate synthetase (Xanthomonas oryzae pv. oryzae (strain KACC10331 / KXO85)).